The sequence spans 369 residues: MDYQQLANQIKQWAIELGFEKVGICDVDLSEHEPALQAWLDAGYHGEMDWMARHGMMRARPAELLPGTLRVISARINYLPPQAQFASNLSDPNQAYISRYALGRDYHKLVRNQLKKLGEKIEQEVGKLGYRPFVDSAPILERPLAQKAGLGWTGKHSLILDKENGSWFFLGELLVDIPLPVDEPSENQCGKCTACITSCPTNAIVAEGVVDARRCVSYLTIEYSGVIPLEFRRAMGNRIYGCDDCQLVCPWNRFAPLTQQSDFHRRQSLNNADLVVLFEWDEATFLKNMEGSAIRRIGHQQWRRNLIIAMGNAPYSPRIIDTLQRHLGQSELLDEHIHWALEEQTQKTATPRQHARLIRIIEKGLPRDA.

D135 functions as the Proton donor in the catalytic mechanism. The region spanning 177 to 209 (IPLPVDEPSENQCGKCTACITSCPTNAIVAEGV) is the 4Fe-4S ferredoxin-type domain. Positions 189, 192, 195, 199, 215, 242, 245, and 249 each coordinate [4Fe-4S] cluster.

This sequence belongs to the QueG family. As to quaternary structure, monomer. The cofactor is cob(II)alamin. It depends on [4Fe-4S] cluster as a cofactor.

It localises to the cytoplasm. The catalysed reaction is epoxyqueuosine(34) in tRNA + AH2 = queuosine(34) in tRNA + A + H2O. It participates in tRNA modification; tRNA-queuosine biosynthesis. Its function is as follows. Catalyzes the conversion of epoxyqueuosine (oQ) to queuosine (Q), which is a hypermodified base found in the wobble positions of tRNA(Asp), tRNA(Asn), tRNA(His) and tRNA(Tyr). In Vibrio cholerae serotype O1 (strain ATCC 39315 / El Tor Inaba N16961), this protein is Epoxyqueuosine reductase.